We begin with the raw amino-acid sequence, 405 residues long: Serine/threonine-protein kinase 2 (405 aa).

The region spanning 54–405 is the Protein kinase domain; that stretch reads NDDFYHISTG…IFSDWINGGN (352 aa). ATP-binding positions include 60 to 68 and Lys-84; that span reads ISTGGYGIV. Asp-274 (proton acceptor) is an active-site residue.

Belongs to the protein kinase superfamily. Ser/Thr protein kinase family. Poxviruses subfamily. Phosphorylated in vivo. Autophosphorylated in vitro.

The protein localises to the host endoplasmic reticulum. It is found in the host endoplasmic reticulum-Golgi intermediate compartment. It carries out the reaction L-seryl-[protein] + ATP = O-phospho-L-seryl-[protein] + ADP + H(+). It catalyses the reaction L-threonyl-[protein] + ATP = O-phospho-L-threonyl-[protein] + ADP + H(+). Functionally, essential serine-protein kinase involved in the early stage of virion morphogenesis. This chain is Serine/threonine-protein kinase 2 (OPG054), found in Vaccinia virus (strain L-IVP) (VACV).